We begin with the raw amino-acid sequence, 398 residues long: CCA-adding enzyme (398 aa).

ATP is bound by residues Gly-32 and Arg-35. CTP is bound by residues Gly-32 and Arg-35. Asp-45 and Asp-47 together coordinate Mg(2+). ATP-binding residues include Arg-116, Asp-159, Arg-162, Arg-165, and Arg-168. 5 residues coordinate CTP: Arg-116, Asp-159, Arg-162, Arg-165, and Arg-168.

Belongs to the tRNA nucleotidyltransferase/poly(A) polymerase family. Bacterial CCA-adding enzyme type 3 subfamily. Homodimer. Mg(2+) serves as cofactor.

The enzyme catalyses a tRNA precursor + 2 CTP + ATP = a tRNA with a 3' CCA end + 3 diphosphate. It catalyses the reaction a tRNA with a 3' CCA end + 2 CTP + ATP = a tRNA with a 3' CCACCA end + 3 diphosphate. Functionally, catalyzes the addition and repair of the essential 3'-terminal CCA sequence in tRNAs without using a nucleic acid template. Adds these three nucleotides in the order of C, C, and A to the tRNA nucleotide-73, using CTP and ATP as substrates and producing inorganic pyrophosphate. tRNA 3'-terminal CCA addition is required both for tRNA processing and repair. Also involved in tRNA surveillance by mediating tandem CCA addition to generate a CCACCA at the 3' terminus of unstable tRNAs. While stable tRNAs receive only 3'-terminal CCA, unstable tRNAs are marked with CCACCA and rapidly degraded. This Lacticaseibacillus paracasei (strain ATCC 334 / BCRC 17002 / CCUG 31169 / CIP 107868 / KCTC 3260 / NRRL B-441) (Lactobacillus paracasei) protein is CCA-adding enzyme.